Consider the following 291-residue polypeptide: Ribosomal RNA small subunit methyltransferase A (291 aa).

Positions 33, 35, 60, 81, 111, and 129 each coordinate S-adenosyl-L-methionine.

The protein belongs to the class I-like SAM-binding methyltransferase superfamily. rRNA adenine N(6)-methyltransferase family. RsmA subfamily.

The protein localises to the cytoplasm. The catalysed reaction is adenosine(1518)/adenosine(1519) in 16S rRNA + 4 S-adenosyl-L-methionine = N(6)-dimethyladenosine(1518)/N(6)-dimethyladenosine(1519) in 16S rRNA + 4 S-adenosyl-L-homocysteine + 4 H(+). Functionally, specifically dimethylates two adjacent adenosines (A1518 and A1519) in the loop of a conserved hairpin near the 3'-end of 16S rRNA in the 30S particle. May play a critical role in biogenesis of 30S subunits. This is Ribosomal RNA small subunit methyltransferase A from Streptomyces griseus subsp. griseus (strain JCM 4626 / CBS 651.72 / NBRC 13350 / KCC S-0626 / ISP 5235).